The primary structure comprises 484 residues: UDP-N-acetylmuramoyl-L-alanyl-D-glutamate--2,6-diaminopimelate ligase (484 aa).

A UDP-N-acetyl-alpha-D-muramoyl-L-alanyl-D-glutamate-binding site is contributed by serine 30. ATP is bound at residue 111–117; sequence GTNGKTT. UDP-N-acetyl-alpha-D-muramoyl-L-alanyl-D-glutamate contacts are provided by residues 153 to 154, serine 180, glutamine 186, and arginine 188; that span reads TT. Lysine 220 is subject to N6-carboxylysine. Meso-2,6-diaminopimelate is bound by residues arginine 378, 402–405, glycine 455, and glutamate 459; that span reads DNPR. Residues 402 to 405 carry the Meso-diaminopimelate recognition motif motif; the sequence is DNPR.

Belongs to the MurCDEF family. MurE subfamily. Mg(2+) is required as a cofactor. Post-translationally, carboxylation is probably crucial for Mg(2+) binding and, consequently, for the gamma-phosphate positioning of ATP.

It is found in the cytoplasm. It catalyses the reaction UDP-N-acetyl-alpha-D-muramoyl-L-alanyl-D-glutamate + meso-2,6-diaminopimelate + ATP = UDP-N-acetyl-alpha-D-muramoyl-L-alanyl-gamma-D-glutamyl-meso-2,6-diaminopimelate + ADP + phosphate + H(+). The protein operates within cell wall biogenesis; peptidoglycan biosynthesis. In terms of biological role, catalyzes the addition of meso-diaminopimelic acid to the nucleotide precursor UDP-N-acetylmuramoyl-L-alanyl-D-glutamate (UMAG) in the biosynthesis of bacterial cell-wall peptidoglycan. In Phocaeicola vulgatus (strain ATCC 8482 / DSM 1447 / JCM 5826 / CCUG 4940 / NBRC 14291 / NCTC 11154) (Bacteroides vulgatus), this protein is UDP-N-acetylmuramoyl-L-alanyl-D-glutamate--2,6-diaminopimelate ligase.